The chain runs to 216 residues: Probable GTP-binding protein EngB (216 aa).

Positions 23 to 197 (EGAEIAFAGR…EHKVAGWLGL (175 aa)) constitute an EngB-type G domain. GTP contacts are provided by residues 31–38 (GRSNAGKS), 58–62 (GRTQL), 76–79 (DLPG), 143–146 (TKCD), and 176–178 (FSS). S38 and T60 together coordinate Mg(2+).

The protein belongs to the TRAFAC class TrmE-Era-EngA-EngB-Septin-like GTPase superfamily. EngB GTPase family. Mg(2+) is required as a cofactor.

Its function is as follows. Necessary for normal cell division and for the maintenance of normal septation. In Aromatoleum aromaticum (strain DSM 19018 / LMG 30748 / EbN1) (Azoarcus sp. (strain EbN1)), this protein is Probable GTP-binding protein EngB.